The chain runs to 186 residues: Peptidyl-tRNA hydrolase (186 aa).

A tRNA-binding site is contributed by tyrosine 14. Histidine 19 functions as the Proton acceptor in the catalytic mechanism. Positions 64, 66, and 112 each coordinate tRNA.

This sequence belongs to the PTH family. In terms of assembly, monomer.

Its subcellular location is the cytoplasm. The catalysed reaction is an N-acyl-L-alpha-aminoacyl-tRNA + H2O = an N-acyl-L-amino acid + a tRNA + H(+). Functionally, hydrolyzes ribosome-free peptidyl-tRNAs (with 1 or more amino acids incorporated), which drop off the ribosome during protein synthesis, or as a result of ribosome stalling. In terms of biological role, catalyzes the release of premature peptidyl moieties from peptidyl-tRNA molecules trapped in stalled 50S ribosomal subunits, and thus maintains levels of free tRNAs and 50S ribosomes. This Listeria monocytogenes serotype 4b (strain CLIP80459) protein is Peptidyl-tRNA hydrolase.